The following is a 434-amino-acid chain: MRKFLLSEGEIPKKWLNILPLLPEPLEPPLDPETMEPVKPEKLLAIFPEPLVEQEVSDKEWIDIPEEVLDIYSLWRPTPLHRAKNLEEFLGTPAKIFYKNESVSPPGSHKPNTAVAQAYYNKISGVKRLTTETGAGQWGSALSFATQFFDLQCRVYMVRVSYNQKPYRRILMETWKGEVIPSPSPYTNAGRKYYEENPEHPGSLGIAISEAIEEAASREDTKYSLGSVLNHVLLHQTVIGLEAKKQMEEAGYYPDVIIGAVGGGSNFAGLSFPFLADVLRGDKRKEDLKVLAVEPEACPTLTKGEYKYDFGDSVGLTPLIKMYTLGHDFVPSPIHAGGLRYHGDAPLVCKLYNLGYIDAVAYKQTEVFEAAVTFARTEGIVPAPESAHAIKAAIDEALKCKETGEEKVILFNLSGHGYFDLSAYDKYLHGELTD.

Residue lysine 110 is modified to N6-(pyridoxal phosphate)lysine.

This sequence belongs to the TrpB family. In terms of assembly, tetramer of two alpha and two beta chains. Pyridoxal 5'-phosphate serves as cofactor.

The catalysed reaction is (1S,2R)-1-C-(indol-3-yl)glycerol 3-phosphate + L-serine = D-glyceraldehyde 3-phosphate + L-tryptophan + H2O. The protein operates within amino-acid biosynthesis; L-tryptophan biosynthesis; L-tryptophan from chorismate: step 5/5. In terms of biological role, the beta subunit is responsible for the synthesis of L-tryptophan from indole and L-serine. This chain is Tryptophan synthase beta chain 2 (trpB2), found in Aquifex aeolicus (strain VF5).